The primary structure comprises 344 residues: Phenylalanine--tRNA ligase alpha subunit (344 aa).

Glutamate 255 serves as a coordination point for Mg(2+).

It belongs to the class-II aminoacyl-tRNA synthetase family. Phe-tRNA synthetase alpha subunit type 1 subfamily. Tetramer of two alpha and two beta subunits. The cofactor is Mg(2+).

The protein localises to the cytoplasm. It carries out the reaction tRNA(Phe) + L-phenylalanine + ATP = L-phenylalanyl-tRNA(Phe) + AMP + diphosphate + H(+). This Phocaeicola vulgatus (strain ATCC 8482 / DSM 1447 / JCM 5826 / CCUG 4940 / NBRC 14291 / NCTC 11154) (Bacteroides vulgatus) protein is Phenylalanine--tRNA ligase alpha subunit.